We begin with the raw amino-acid sequence, 431 residues long: Histidinol dehydrogenase (431 aa).

Positions 130, 191, and 214 each coordinate NAD(+). Substrate-binding residues include Ser237, Gln259, and His262. 2 residues coordinate Zn(2+): Gln259 and His262. Active-site proton acceptor residues include Glu327 and His328. Residues His328, Asp361, Glu415, and His420 each contribute to the substrate site. Position 361 (Asp361) interacts with Zn(2+). His420 contributes to the Zn(2+) binding site.

The protein belongs to the histidinol dehydrogenase family. It depends on Zn(2+) as a cofactor.

It catalyses the reaction L-histidinol + 2 NAD(+) + H2O = L-histidine + 2 NADH + 3 H(+). Its pathway is amino-acid biosynthesis; L-histidine biosynthesis; L-histidine from 5-phospho-alpha-D-ribose 1-diphosphate: step 9/9. Catalyzes the sequential NAD-dependent oxidations of L-histidinol to L-histidinaldehyde and then to L-histidine. The sequence is that of Histidinol dehydrogenase from Syntrophotalea carbinolica (strain DSM 2380 / NBRC 103641 / GraBd1) (Pelobacter carbinolicus).